The primary structure comprises 574 residues: Dihydroxy-acid dehydratase 2 (574 aa).

The interval 1 to 20 (MNAKTNIKQRLPSRHVTEGP) is disordered. Cysteine 56 is a binding site for [2Fe-2S] cluster. A Mg(2+)-binding site is contributed by aspartate 88. Cysteine 129 provides a ligand contact to [2Fe-2S] cluster. Positions 130 and 131 each coordinate Mg(2+). Lysine 131 bears the N6-carboxylysine mark. Cysteine 201 is a [2Fe-2S] cluster binding site. Residue glutamate 451 coordinates Mg(2+). The Proton acceptor role is filled by serine 477.

Belongs to the IlvD/Edd family. In terms of assembly, homodimer. It depends on [2Fe-2S] cluster as a cofactor. Mg(2+) serves as cofactor.

It catalyses the reaction (2R)-2,3-dihydroxy-3-methylbutanoate = 3-methyl-2-oxobutanoate + H2O. It carries out the reaction (2R,3R)-2,3-dihydroxy-3-methylpentanoate = (S)-3-methyl-2-oxopentanoate + H2O. Its pathway is amino-acid biosynthesis; L-isoleucine biosynthesis; L-isoleucine from 2-oxobutanoate: step 3/4. It participates in amino-acid biosynthesis; L-valine biosynthesis; L-valine from pyruvate: step 3/4. Its function is as follows. Functions in the biosynthesis of branched-chain amino acids. Catalyzes the dehydration of (2R,3R)-2,3-dihydroxy-3-methylpentanoate (2,3-dihydroxy-3-methylvalerate) into 2-oxo-3-methylpentanoate (2-oxo-3-methylvalerate) and of (2R)-2,3-dihydroxy-3-methylbutanoate (2,3-dihydroxyisovalerate) into 2-oxo-3-methylbutanoate (2-oxoisovalerate), the penultimate precursor to L-isoleucine and L-valine, respectively. The protein is Dihydroxy-acid dehydratase 2 of Bradyrhizobium diazoefficiens (strain JCM 10833 / BCRC 13528 / IAM 13628 / NBRC 14792 / USDA 110).